Consider the following 511-residue polypeptide: MTIILKPGSVPLETLEKIYREGLPVRIDPAFHAGIEKAAARIAEIAAGDAPVYGINTGFGKLASIRIAAGDVATLQRNLILSHCCGVGEPLSENIVRLIMALKLVSLGRGASGVRLEVITLIEAMLEKGVIPMIPEKGSVGASGDLAPLAHMTAAMIGEGEAFYRGERLSGAKALGKAGLKPVVLAAKEGLALINGTQTSTALALAGLFRAHRAVRTALITGALSTDAAMGSDAPFHEEIHQLRGHKGQIDAGRALRTLLEGSAIRRSHLEGDQRVQDPYCIRCQPQVDGACLDILRQAARTLEIEANAVTDNPLVLSDGRAVSGGNFHAEPVAFAADQIALAVCEIGAISQRRIALLVDPSLSFGLPAFLTRKPGLNSGLMIAEVTSAALMSENKQMAHPASVDSTPTSANQEDHVSMACHGARRLLQMTANLNAIIGIEALTGALGVELRKPLTTSAELAKVIAALRAKVVTLEEDRYMADDLKAAAELVADGTLSGVISAGILPDLEA.

The segment at residues A142–G144 is a cross-link (5-imidazolinone (Ala-Gly)). A 2,3-didehydroalanine (Ser) modification is found at S143.

It belongs to the PAL/histidase family. Post-translationally, contains an active site 4-methylidene-imidazol-5-one (MIO), which is formed autocatalytically by cyclization and dehydration of residues Ala-Ser-Gly.

The protein localises to the cytoplasm. It catalyses the reaction L-histidine = trans-urocanate + NH4(+). It participates in amino-acid degradation; L-histidine degradation into L-glutamate; N-formimidoyl-L-glutamate from L-histidine: step 1/3. The sequence is that of Histidine ammonia-lyase from Brucella suis biovar 1 (strain 1330).